The sequence spans 223 residues: Noggin-3 (223 aa).

The first 23 residues, 1–23 (MDNIPYFLATVLIFSLGFRIEEG), serve as a signal peptide directing secretion. N-linked (GlcNAc...) asparagine glycosylation is found at Asn60 and Asn93.

The protein belongs to the noggin family. In terms of assembly, homodimer; disulfide-linked.

The protein localises to the secreted. May function as an inhibitor of bone morphogenetic proteins (BMP) signaling during later stages of development including late phases of dorsoventral patterning, to refine the early pattern set up by the interaction of chordino and BMP2/4. Not involved in organizer function or early phases of dorsoventral pattern formation. This is Noggin-3 (nog3) from Danio rerio (Zebrafish).